The chain runs to 257 residues: MLAIISPAKTLDFETKIDGFVFSQPELTAYSQQLIDICKQFSPAEVASLMSISDKLASLNVARFAEWTMEHNEQNAKAALFAFKGDVYTGLEAETLTNAEIDYAQRHLRMLSGLYGLLKPLDLMQPYRLEMGTKLANPKGKDLYHFWDNIITQHLQQAIDAQEDNILVNLASDEYFGAVQAERLTAKIVKPVFLDEKNGKYKVISFYAKKARGMMVRFMLQTQPTSIEQLKAFNYGGYWFDETASTDTELVFKREEQ.

It belongs to the UPF0246 family.

The sequence is that of UPF0246 protein HAPS_0280 from Glaesserella parasuis serovar 5 (strain SH0165) (Haemophilus parasuis).